The chain runs to 47 residues: Bacteriocin curvaticin DN317 (47 aa).

Belongs to the bacteriocin class IIA/YGNGV family.

The protein resides in the secreted. Functionally, has bactericidal activity against various Gram-negative Campylobacter, and the Gram-positive L.monocytogenes and B.subtilis. In vitro, inhibits C.jejuni strain ATCC 33560 (MIC=27.3 ug/ml). The protein is Bacteriocin curvaticin DN317 of Latilactobacillus curvatus (Lactobacillus curvatus).